Here is a 289-residue protein sequence, read N- to C-terminus: Acetyl-coenzyme A carboxylase carboxyl transferase subunit beta (289 aa).

The 256-residue stretch at Met-34–Phe-289 folds into the CoA carboxyltransferase N-terminal domain. Zn(2+)-binding residues include Cys-38, Cys-41, Cys-57, and Cys-60. A C4-type zinc finger spans residues Cys-38–Cys-60.

The protein belongs to the AccD/PCCB family. Acetyl-CoA carboxylase is a heterohexamer composed of biotin carboxyl carrier protein (AccB), biotin carboxylase (AccC) and two subunits each of ACCase subunit alpha (AccA) and ACCase subunit beta (AccD). Zn(2+) serves as cofactor.

The protein resides in the cytoplasm. It catalyses the reaction N(6)-carboxybiotinyl-L-lysyl-[protein] + acetyl-CoA = N(6)-biotinyl-L-lysyl-[protein] + malonyl-CoA. Its pathway is lipid metabolism; malonyl-CoA biosynthesis; malonyl-CoA from acetyl-CoA: step 1/1. In terms of biological role, component of the acetyl coenzyme A carboxylase (ACC) complex. Biotin carboxylase (BC) catalyzes the carboxylation of biotin on its carrier protein (BCCP) and then the CO(2) group is transferred by the transcarboxylase to acetyl-CoA to form malonyl-CoA. The sequence is that of Acetyl-coenzyme A carboxylase carboxyl transferase subunit beta from Clostridium botulinum (strain ATCC 19397 / Type A).